A 121-amino-acid chain; its full sequence is Large ribosomal subunit protein bL19 (121 aa).

The protein belongs to the bacterial ribosomal protein bL19 family.

Functionally, this protein is located at the 30S-50S ribosomal subunit interface and may play a role in the structure and function of the aminoacyl-tRNA binding site. This chain is Large ribosomal subunit protein bL19, found in Gloeobacter violaceus (strain ATCC 29082 / PCC 7421).